A 634-amino-acid chain; its full sequence is Probable potassium transport system protein Kup (634 aa).

The next 12 membrane-spanning stretches (helical) occupy residues isoleucine 21–leucine 41, valine 58–valine 78, isoleucine 110–isoleucine 130, proline 148–cysteine 168, phenylalanine 180–isoleucine 200, phenylalanine 217–threonine 237, tryptophan 258–leucine 278, glycine 296–isoleucine 316, isoleucine 348–phenylalanine 368, alanine 377–alanine 397, leucine 408–isoleucine 428, and aspartate 432–leucine 452.

The protein belongs to the HAK/KUP transporter (TC 2.A.72) family.

The protein resides in the cell inner membrane. The enzyme catalyses K(+)(in) + H(+)(in) = K(+)(out) + H(+)(out). Its function is as follows. Transport of potassium into the cell. Likely operates as a K(+):H(+) symporter. This is Probable potassium transport system protein Kup from Xylella fastidiosa (strain Temecula1 / ATCC 700964).